A 657-amino-acid chain; its full sequence is Pentatricopeptide repeat-containing protein At5g44230 (657 aa).

PPR repeat units lie at residues 45-79 (KELL…GLDQ), 80-112 (SCYI…VQFR), 113-147 (NPFL…EITP), 148-178 (VSFT…TFRL), 183-213 (FVYV…MPER), 214-244 (DVIS…LPTK), 245-279 (DMVA…GIRA), 280-314 (DEVT…GYSP), 317-347 (HVVI…MNNK), 348-383 (NVFT…EIKP), 384-419 (NTVT…GVQP), and 420-450 (TRDH…MSVE). The segment at 455–530 (VWGALLGACR…TPAVSWVVDK (76 aa)) is type E motif. A type E(+) motif region spans residues 532–562 (GQMHKFFPGNLNHPMSNKIQDKLEELVERLT). Positions 563–657 (VLGYQPDLSS…SGDCSCGDFW (95 aa)) are type DYW motif.

The protein belongs to the PPR family. PCMP-H subfamily.

The chain is Pentatricopeptide repeat-containing protein At5g44230 (PCMP-H17) from Arabidopsis thaliana (Mouse-ear cress).